Reading from the N-terminus, the 166-residue chain is MSKPLCSTGLRWLWLVVVVLIIDLGSKYLILQNFALGDTVGLFPSLNLHYARNYGAAFSFLADSGGWQRWFFAGIAIGICVILLVMMYRSKATQKLNNIAYALIIGGALGNLFDRLWHGFVVDMIDFYVGNWHFATFNLADSAICIGAALIVLEGFLPKPTAKEQA.

The next 3 membrane-spanning stretches (helical) occupy residues 12-32, 70-90, and 102-122; these read WLWL…LILQ, WFFA…MYRS, and ALII…GFVV. Residues D123 and D141 contribute to the active site. Residues 137–157 form a helical membrane-spanning segment; the sequence is FNLADSAICIGAALIVLEGFL.

The protein belongs to the peptidase A8 family.

It is found in the cell inner membrane. It catalyses the reaction Release of signal peptides from bacterial membrane prolipoproteins. Hydrolyzes -Xaa-Yaa-Zaa-|-(S,diacylglyceryl)Cys-, in which Xaa is hydrophobic (preferably Leu), and Yaa (Ala or Ser) and Zaa (Gly or Ala) have small, neutral side chains.. It functions in the pathway protein modification; lipoprotein biosynthesis (signal peptide cleavage). This protein specifically catalyzes the removal of signal peptides from prolipoproteins. This Salmonella choleraesuis (strain SC-B67) protein is Lipoprotein signal peptidase.